Here is a 199-residue protein sequence, read N- to C-terminus: Peptidyl-tRNA hydrolase (199 aa).

Y18 serves as a coordination point for tRNA. H23 functions as the Proton acceptor in the catalytic mechanism. TRNA-binding residues include Y72, N74, and N120.

Belongs to the PTH family. Monomer.

The protein resides in the cytoplasm. It carries out the reaction an N-acyl-L-alpha-aminoacyl-tRNA + H2O = an N-acyl-L-amino acid + a tRNA + H(+). Functionally, hydrolyzes ribosome-free peptidyl-tRNAs (with 1 or more amino acids incorporated), which drop off the ribosome during protein synthesis, or as a result of ribosome stalling. Catalyzes the release of premature peptidyl moieties from peptidyl-tRNA molecules trapped in stalled 50S ribosomal subunits, and thus maintains levels of free tRNAs and 50S ribosomes. The protein is Peptidyl-tRNA hydrolase of Bifidobacterium animalis subsp. lactis (strain AD011).